Consider the following 195-residue polypeptide: Imidazoleglycerol-phosphate dehydratase (195 aa).

Belongs to the imidazoleglycerol-phosphate dehydratase family.

Its subcellular location is the cytoplasm. The enzyme catalyses D-erythro-1-(imidazol-4-yl)glycerol 3-phosphate = 3-(imidazol-4-yl)-2-oxopropyl phosphate + H2O. It functions in the pathway amino-acid biosynthesis; L-histidine biosynthesis; L-histidine from 5-phospho-alpha-D-ribose 1-diphosphate: step 6/9. The chain is Imidazoleglycerol-phosphate dehydratase from Koribacter versatilis (strain Ellin345).